Reading from the N-terminus, the 217-residue chain is MKIFIDTANVEEIRKASELGVLSGVTTNPSLIAKEGRDLKEVVEEICNIVDGPISAEVISLEYEKMIEEGRELSKLHKNIVIKIPMCEEGLKAVSVLSKEGIKTNVTLIFSSMQALLAARAGATYVSPFLGRLDDIGNPGIEVVEQIADMFKIHEIKTEIIAASVRTPMHVLEAAMAGSHIATIPYKVIIQMSKHALTDIGIEKFMKDYEKAFGENK.

Lys83 serves as the catalytic Schiff-base intermediate with substrate.

This sequence belongs to the transaldolase family. Type 3B subfamily.

The protein localises to the cytoplasm. It carries out the reaction D-sedoheptulose 7-phosphate + D-glyceraldehyde 3-phosphate = D-erythrose 4-phosphate + beta-D-fructose 6-phosphate. The protein operates within carbohydrate degradation; pentose phosphate pathway; D-glyceraldehyde 3-phosphate and beta-D-fructose 6-phosphate from D-ribose 5-phosphate and D-xylulose 5-phosphate (non-oxidative stage): step 2/3. Its function is as follows. Transaldolase is important for the balance of metabolites in the pentose-phosphate pathway. In Clostridium botulinum (strain Hall / ATCC 3502 / NCTC 13319 / Type A), this protein is Probable transaldolase.